A 161-amino-acid polypeptide reads, in one-letter code: Ribonuclease P protein component (161 aa).

It belongs to the RnpA family. As to quaternary structure, consists of a catalytic RNA component (M1 or rnpB) and a protein subunit.

The enzyme catalyses Endonucleolytic cleavage of RNA, removing 5'-extranucleotides from tRNA precursor.. Its function is as follows. RNaseP catalyzes the removal of the 5'-leader sequence from pre-tRNA to produce the mature 5'-terminus. It can also cleave other RNA substrates such as 4.5S RNA. The protein component plays an auxiliary but essential role in vivo by binding to the 5'-leader sequence and broadening the substrate specificity of the ribozyme. The protein is Ribonuclease P protein component of Helicobacter pylori (strain Shi470).